A 163-amino-acid polypeptide reads, in one-letter code: MLNHFNFKLKRDVTIIVPGEAFVSNKRVISTILGSCVAVVLCDESSNLIGMNHYVLVKSDLDISPAQRGRYGIYAIPMLINAMLENGANKSNLKAKLFGGTNFMAKGSVKVGLENSEFAINTLNKYRIPILAKDFDQSKSRKIFAFPESFKVIVEYPDGTKVF.

Belongs to the CheD family.

It catalyses the reaction L-glutaminyl-[protein] + H2O = L-glutamyl-[protein] + NH4(+). Its function is as follows. Probably deamidates glutamine residues to glutamate on methyl-accepting chemotaxis receptors (MCPs), playing an important role in chemotaxis. This chain is Probable chemoreceptor glutamine deamidase CheD, found in Borreliella afzelii (strain PKo) (Borrelia afzelii).